The chain runs to 1708 residues: 187-kDa microtubule-associated protein AIR9 (1708 aa).

Residues 67–93 (SSLRVSGTTPVTIRRNSTGGVTENLAG) are compositionally biased toward polar residues. The disordered stretch occupies residues 67–255 (SSLRVSGTTP…KTSTPESRDS (189 aa)). Residues 110 to 121 (DPVRRSLPELRK) are compositionally biased toward basic and acidic residues. Residues 122 to 134 (SSVSSLSAKTVSK) show a composition bias toward low complexity. Polar residues predominate over residues 149-165 (GSRSLTKSTGFSLSKPE). Residues 173-234 (SVSVSSKRAP…SIRSKSFSSP (62 aa)) show a composition bias toward low complexity. 7 LRR repeats span residues 267-290 (AGDD…GLHL), 291-315 (SPNL…ILNR), 316-335 (VKVL…EPLE), 337-359 (CKML…LPQL), 360-382 (PNLE…SQPR), 384-402 (QVLA…FPYL), and 403-425 (PVLE…EAAS). A9 repeat units lie at residues 489–584 (PSGY…FAIS), 601–682 (LNGE…QYKY), 698–777 (ITGD…VSTS), 793–878 (IVGD…VYVL), 895–977 (ITGD…RSCM), 994–1073 (VVGA…AISE), 1090–1167 (FLGS…RSIR), 1183–1272 (IPDC…VVVI), 1287–1365 (VRVK…KMSE), 1382–1473 (FTGK…AYAE), and 1489–1569 (IEGQ…VSAS).

As to quaternary structure, interacts with KCBP. Strongly expressed in dividing cells, like the meristemic region of the root tip.

Its subcellular location is the cytoplasm. It is found in the cell cortex. The protein localises to the cytoskeleton. It localises to the phragmoplast. In terms of biological role, microtubule-associated protein that may be involved in the maturation of cell plates and proper insertion of cross-walls after cytokinesis. This Arabidopsis thaliana (Mouse-ear cress) protein is 187-kDa microtubule-associated protein AIR9.